Reading from the N-terminus, the 279-residue chain is Protein BASIC PENTACYSTEINE2 (279 aa).

A disordered region spans residues 126-167 (TKKRKTNAKAGSTPKAKKPRKPKDENSNNNNNNNTNVTRVKP). A compositionally biased stretch (low complexity) spans 152 to 161 (SNNNNNNNTN).

The protein belongs to the BBR/BPC family. In terms of tissue distribution, expressed in seedlings, leaves and pistils. Detected in the base of flowers and tips of carpels, in sepal and petal vasculature, in pollen grains, in young rosette, in the lateral and tip of primary roots, and in ovule at the exception of the outer integument.

The protein resides in the nucleus. In terms of biological role, transcriptional regulator that specifically binds to GA-rich elements (GAGA-repeats) present in regulatory sequences of genes involved in developmental processes. The polypeptide is Protein BASIC PENTACYSTEINE2 (Arabidopsis thaliana (Mouse-ear cress)).